Here is a 903-residue protein sequence, read N- to C-terminus: KAT8 regulatory NSL complex subunit 1-like protein (903 aa).

Disordered regions lie at residues 319-343 (DSDATGSSSDEDWDEKARQNSDECN), 419-441 (MPKSPQGTNPSPTNDLDMSPSSP), and 652-676 (TECTSSYSPDPQTPAHSWERRHRSE). Composition is skewed to polar residues over residues 423–441 (PQGTNPSPTNDLDMSPSSP) and 652–661 (TECTSSYSPD). Residues 748 to 862 (EIITPSWKEV…ESPKGKTIHW (115 aa)) form the PEHE domain.

This is KAT8 regulatory NSL complex subunit 1-like protein (kansl1l) from Xenopus tropicalis (Western clawed frog).